The chain runs to 1006 residues: D-2-hydroxyglutarate dehydrogenase (1006 aa).

The region spanning 47–279 is the FAD-binding PCMH-type domain; it reads YQRLPQAAVF…VEAKLNVLPI (233 aa). Residues arginine 397 and histidine 495 each coordinate (R)-2-hydroxyglutarate. The 4Fe-4S ferredoxin-type domain maps to 655–687; it reads SHEVYDAMAGCLACKSCAGQCPIKVNVPDFRSR. Cysteine 665, cysteine 668, cysteine 671, and cysteine 675 together coordinate [4Fe-4S] cluster.

It in the N-terminal section; belongs to the FAD-binding oxidoreductase/transferase type 4 family. [4Fe-4S] cluster is required as a cofactor. It depends on FAD as a cofactor.

The catalysed reaction is (R)-2-hydroxyglutarate + A = 2-oxoglutarate + AH2. It functions in the pathway amino-acid degradation. Catalyzes the oxidation of D-2-hydroxyglutarate (D-2-HGA) to 2-oxoglutarate. Is involved in a D-lysine catabolic pathway. The polypeptide is D-2-hydroxyglutarate dehydrogenase (Pseudomonas putida (strain ATCC 47054 / DSM 6125 / CFBP 8728 / NCIMB 11950 / KT2440)).